The following is a 1050-amino-acid chain: Nuclear pore complex-interacting protein family member B3 (1050 aa).

A helical membrane pass occupies residues 63–87 (VIIAFPTSYKVVITLWIVYLWVSLL). Disordered stretches follow at residues 241 to 262 (NRMG…NSLS), 290 to 574 (LTPL…NIKT), and 785 to 1050 (ERLR…RRLS). Over residues 252 to 262 (QQHSITDNSLS) the composition is skewed to polar residues. Positions 349–359 (PLPPSALPSAP) are enriched in pro residues. 7 stretches are compositionally biased toward basic and acidic residues: residues 406–416 (DNIKTPAERLR), 448–458 (DNIKTPAERLR), 490–500 (DNIKTPAERLR), 528–538 (DNIKTPAERLR), 820–830 (DNIKTPAERLR), 862–872 (DNIKTPAERLR), and 904–914 (DNIKTPAERLR).

It belongs to the NPIP family.

The protein resides in the membrane. This is Nuclear pore complex-interacting protein family member B3 (NPIPB3) from Homo sapiens (Human).